Consider the following 129-residue polypeptide: Small ribosomal subunit protein uS11 (129 aa).

Belongs to the universal ribosomal protein uS11 family. Part of the 30S ribosomal subunit. Interacts with proteins S7 and S18. Binds to IF-3.

Functionally, located on the platform of the 30S subunit, it bridges several disparate RNA helices of the 16S rRNA. Forms part of the Shine-Dalgarno cleft in the 70S ribosome. The chain is Small ribosomal subunit protein uS11 from Pelotomaculum thermopropionicum (strain DSM 13744 / JCM 10971 / SI).